Here is a 465-residue protein sequence, read N- to C-terminus: Dihydrolipoyllysine-residue acetyltransferase component 5 of pyruvate dehydrogenase complex, chloroplastic (465 aa).

The N-terminal 31 residues, 1–31 (MSRLLQTPFLPSVSLPTKTRSSVTGFRVKPR), are a transit peptide targeting the chloroplast. The Lipoyl-binding domain occupies 39–114 (IREIFMPALS…PVGSAIALLA (76 aa)). An N6-lipoyllysine modification is found at Lys-80. Positions 123-148 (AKAKASGGGGGGDSKAPPASPPTAAV) are disordered. Over residues 136–148 (SKAPPASPPTAAV) the composition is skewed to low complexity. Positions 184 to 221 (VASPYAKKLAKELKVELAGLVGSGPMGRIVAKDVEAVA) constitute a Peripheral subunit-binding (PSBD) domain. His-438 is an active-site residue.

It belongs to the 2-oxoacid dehydrogenase family. Requires (R)-lipoate as cofactor.

It is found in the plastid. The protein resides in the chloroplast stroma. It carries out the reaction N(6)-[(R)-dihydrolipoyl]-L-lysyl-[protein] + acetyl-CoA = N(6)-[(R)-S(8)-acetyldihydrolipoyl]-L-lysyl-[protein] + CoA. Its function is as follows. The pyruvate dehydrogenase complex catalyzes the overall conversion of pyruvate to acetyl-CoA and CO(2). It contains multiple copies of three enzymatic components: pyruvate dehydrogenase (E1), dihydrolipoamide acetyltransferase (E2) and lipoamide dehydrogenase (E3). The protein is Dihydrolipoyllysine-residue acetyltransferase component 5 of pyruvate dehydrogenase complex, chloroplastic (EMB3003) of Arabidopsis thaliana (Mouse-ear cress).